The chain runs to 292 residues: MPKLSPRDIKSKIAGIKNTMRITNAMKVVSAAKLRKAQEAIFKARPYSDKLYELMAHLFAHIDTYSHPLFKRRELKNVDLVIISADRGLAGAFNTNLFKKVDSYLKSCPSQRINLHIVGKKANQYYSKRSYHIVSSYQDVFKKEINFDIVKELGAKLISRYKEEETDHIVLFNNEMITKATYAPKERRFLPITYEDVHIQEPKLDHNTIYNIEGNETDILDGIISIYMNYQLYRAMLESNAAEHFARMVAMDNATRNASDLIKKWTLIFNKARQESITAELIDIVTAAEAMD.

It belongs to the ATPase gamma chain family. F-type ATPases have 2 components, CF(1) - the catalytic core - and CF(0) - the membrane proton channel. CF(1) has five subunits: alpha(3), beta(3), gamma(1), delta(1), epsilon(1). CF(0) has three main subunits: a, b and c.

The protein localises to the cell inner membrane. Produces ATP from ADP in the presence of a proton gradient across the membrane. The gamma chain is believed to be important in regulating ATPase activity and the flow of protons through the CF(0) complex. This Hydrogenobaculum sp. (strain Y04AAS1) protein is ATP synthase gamma chain.